A 541-amino-acid polypeptide reads, in one-letter code: Chaperonin GroEL 1 (541 aa).

Residues 29–32 (TLGP), 86–90 (DGTTT), Gly413, 477–479 (NAA), and Asp493 contribute to the ATP site.

The protein belongs to the chaperonin (HSP60) family. In terms of assembly, forms a cylinder of 14 subunits composed of two heptameric rings stacked back-to-back. Interacts with the co-chaperonin GroES.

It is found in the cytoplasm. It carries out the reaction ATP + H2O + a folded polypeptide = ADP + phosphate + an unfolded polypeptide.. Functionally, together with its co-chaperonin GroES, plays an essential role in assisting protein folding. The GroEL-GroES system forms a nano-cage that allows encapsulation of the non-native substrate proteins and provides a physical environment optimized to promote and accelerate protein folding. The chain is Chaperonin GroEL 1 from Nocardioides sp. (strain ATCC BAA-499 / JS614).